The sequence spans 144 residues: Large ribosomal subunit protein uL16 (144 aa).

Belongs to the universal ribosomal protein uL16 family. As to quaternary structure, part of the 50S ribosomal subunit.

Its function is as follows. Binds 23S rRNA and is also seen to make contacts with the A and possibly P site tRNAs. This is Large ribosomal subunit protein uL16 from Latilactobacillus sakei subsp. sakei (strain 23K) (Lactobacillus sakei subsp. sakei).